We begin with the raw amino-acid sequence, 220 residues long: Sec-independent protein translocase protein TatB (220 aa).

The chain crosses the membrane as a helical span at residues 1-21 (MFDIGFSELLLVLVIGLVVLG). A disordered region spans residues 192 to 220 (KQQIDTIDSHGTDLSSAGPSRIHQPGGDQ).

This sequence belongs to the TatB family. The Tat system comprises two distinct complexes: a TatABC complex, containing multiple copies of TatA, TatB and TatC subunits, and a separate TatA complex, containing only TatA subunits. Substrates initially bind to the TatABC complex, which probably triggers association of the separate TatA complex to form the active translocon.

The protein localises to the cell inner membrane. Part of the twin-arginine translocation (Tat) system that transports large folded proteins containing a characteristic twin-arginine motif in their signal peptide across membranes. Together with TatC, TatB is part of a receptor directly interacting with Tat signal peptides. TatB may form an oligomeric binding site that transiently accommodates folded Tat precursor proteins before their translocation. The chain is Sec-independent protein translocase protein TatB from Yersinia pestis bv. Antiqua (strain Antiqua).